The following is a 1157-amino-acid chain: Endo-1,4-beta-xylanase A (1157 aa).

The first 33 residues, 1–33 (MMKNNVDRIVSIVTALIMIFGASLFSPPIRVFA), serve as a signal peptide directing secretion. 2 CBM-cenC domains span residues 38–189 (INLV…VTTQ) and 195–343 (GNVI…VIGE). Positions 352–675 (QNDIPDLYSV…KPAFWAVVDP (324 aa)) constitute a GH10 domain. The active-site Proton donor is Glu-495. The active site involves Asp-537. The active-site Nucleophile is Glu-600. 2 consecutive SLH domains span residues 1051 to 1114 (KKGV…YSGE) and 1115 to 1157 (FSDV…EMTQ).

The protein belongs to the glycosyl hydrolase 10 (cellulase F) family.

The catalysed reaction is Endohydrolysis of (1-&gt;4)-beta-D-xylosidic linkages in xylans.. It functions in the pathway glycan degradation; xylan degradation. Functionally, endo-acting enzyme that randomly cleaves the internal xylosidic linkages of the xylan backbone, yielding xylooligosaccharides of various lengths which are further hydrolyzed to xylose molecules by beta-xylosidase (EC 3.2.1.37). Requires at least three xylose residues for catalytic activity. Does not have activity against xylobiose. The sequence is that of Endo-1,4-beta-xylanase A (xynA) from Thermoanaerobacterium saccharolyticum.